A 40-amino-acid polypeptide reads, in one-letter code: Beta-glucosidase 1 (40 aa).

It catalyses the reaction Hydrolysis of terminal, non-reducing beta-D-glucosyl residues with release of beta-D-glucose.. This is Beta-glucosidase 1 from Passalora fulva (Tomato leaf mold).